The primary structure comprises 549 residues: SH3 domain-containing protein 21 (549 aa).

The tract at residues 1-56 (MVQSELQLQPRAGRRADASNWGDFGSDKGGLGNTDIPPITPNSQRPPKLSNLTYDS) is disordered. Residues 41-54 (PNSQRPPKLSNLTY) show a composition bias toward polar residues. The region spanning 65–126 (SCPETCRVLF…PDNFVIPPPP (62 aa)) is the SH3 domain. Disordered stretches follow at residues 142–303 (PIKE…KPAK) and 332–479 (FKKE…KSKN). A compositionally biased stretch (low complexity) spans 211–220 (QASQQHSASS). Composition is skewed to basic and acidic residues over residues 267–280 (PVPK…KIPA) and 332–342 (FKKEPSRDNDQ). 2 stretches are compositionally biased toward polar residues: residues 343–365 (CQHL…NNIQ) and 439–456 (VLPQ…TIQQ). Residues 482 to 510 (MDVLESLKEEVGLLRSRLELLELKLEQKM) adopt a coiled-coil conformation. The interval 528-549 (QMMQRNRKSFKHAETQTETQTE) is disordered.

This is SH3 domain-containing protein 21 (Sh3d21) from Mus musculus (Mouse).